The primary structure comprises 324 residues: Elongation factor P--(R)-beta-lysine ligase (324 aa).

75-77 (SPE) contacts substrate. ATP is bound by residues 99–101 (RNK) and Asn-108. A substrate-binding site is contributed by Tyr-117. Position 243-244 (243-244 (EL)) interacts with ATP. Glu-250 serves as a coordination point for substrate. Gly-299 serves as a coordination point for ATP.

It belongs to the class-II aminoacyl-tRNA synthetase family. EpmA subfamily. As to quaternary structure, homodimer.

The enzyme catalyses D-beta-lysine + L-lysyl-[protein] + ATP = N(6)-((3R)-3,6-diaminohexanoyl)-L-lysyl-[protein] + AMP + diphosphate + H(+). With EpmB is involved in the beta-lysylation step of the post-translational modification of translation elongation factor P (EF-P). Catalyzes the ATP-dependent activation of (R)-beta-lysine produced by EpmB, forming a lysyl-adenylate, from which the beta-lysyl moiety is then transferred to the epsilon-amino group of a conserved specific lysine residue in EF-P. In Buchnera aphidicola subsp. Acyrthosiphon pisum (strain 5A), this protein is Elongation factor P--(R)-beta-lysine ligase.